We begin with the raw amino-acid sequence, 227 residues long: MKFTALAKATLALGILTTGTLTTEVHSGHAKQNQKSVNKHDKEALYRYYTGKTMEMKNISALKHGKNNLRFKFRGIKIQVLLPGNDKSKFQQRSYEGLDVFFVQEKRDKHDIFYTVGGVIQNNKTSGVVSAPILNISKEKGEDAFVKGYPYYIKKEKITLKELDYKLRKHLIEKYGLYKTISKDGRVKISLKDGSFYNLDLRSKLKFKYMGEVIESKQIKDIEVNLK.

Positions 1–30 (MKFTALAKATLALGILTTGTLTTEVHSGHA) are cleaved as a signal peptide.

This sequence belongs to the staphylococcal/streptococcal toxin family. As to quaternary structure, interacts with prothrombin/F2 and coagulation factor X/F12. Interacts with human CXCR4.

The protein resides in the secreted. Plays a role in the inhibition of host complement activation via the classical pathway by interacting with the Fc region of human IgG and thereby interfering with the IgG/C1q interaction. Also inhibits the penultimate step of plasma clotting by interacting with prothrombin/F2 and coagulation factor X/F12. Does not affect the protease activity of thrombin but interferes with the conversion of prothrombin to thrombin. Interacts with human receptor CXCR4 and specifically inhibits CXCL12-induced calcium mobilization and cell migration. The protein is Staphylococcal superantigen-like 10 of Staphylococcus aureus (strain NCTC 8325 / PS 47).